The following is a 93-amino-acid chain: NADH-dependent phenylglyoxylate dehydrogenase subunit delta (93 aa).

2 4Fe-4S ferredoxin-type domains span residues 39–68 (MRPV…EHAA) and 66–93 (HAAW…RRSR).

Dimer of heteropentamers composed of an alpha (PadG), a beta (PadI), a gamma (PadE), a delta (PadF) and an epsilon (PadH) subunit. It depends on [4Fe-4S] cluster as a cofactor.

It catalyses the reaction phenylglyoxylate + NAD(+) + CoA = benzoyl-CoA + CO2 + NADH. Activated by magnesium ions and thiamine diphosphate. Involved in the anaerobic metabolism of phenylalanine and phenylacetate. Catalyzes the oxidative decarboxylation of phenylglyoxylate to benzoyl-CoA and CO(2). It can also react slowly with 2-oxo-3-methylbutanoate and use different electron acceptors such as benzyl viologen, methyl viologen, FAD or FMN, but NAD seems to be the physiological electron acceptor. Also catalyzes an isotope exchange between CO(2) and the carboxyl group which proves partial or complete reversibility of the oxidative decarboxylation reaction. This Aromatoleum evansii (Azoarcus evansii) protein is NADH-dependent phenylglyoxylate dehydrogenase subunit delta (padF).